We begin with the raw amino-acid sequence, 650 residues long: DNA gyrase subunit B (650 aa).

Residues 400-414 show a composition bias toward basic and acidic residues; it reads RRSQEARELTRRKSP. Residues 400–422 are disordered; that stretch reads RRSQEARELTRRKSPFDSGSLPG. The 115-residue stretch at 435-549 folds into the Toprim domain; sequence SELYIVEGDS…QGNIFIAQPP (115 aa). The Mg(2+) site is built by E441, D514, and D516.

It belongs to the type II topoisomerase GyrB family. Heterotetramer, composed of two GyrA and two GyrB chains. In the heterotetramer, GyrA contains the active site tyrosine that forms a transient covalent intermediate with DNA, while GyrB binds cofactors and catalyzes ATP hydrolysis. The cofactor is Mg(2+). Requires Mn(2+) as cofactor. Ca(2+) is required as a cofactor.

It is found in the cytoplasm. The catalysed reaction is ATP-dependent breakage, passage and rejoining of double-stranded DNA.. In terms of biological role, a type II topoisomerase that negatively supercoils closed circular double-stranded (ds) DNA in an ATP-dependent manner to modulate DNA topology and maintain chromosomes in an underwound state. Negative supercoiling favors strand separation, and DNA replication, transcription, recombination and repair, all of which involve strand separation. Also able to catalyze the interconversion of other topological isomers of dsDNA rings, including catenanes and knotted rings. Type II topoisomerases break and join 2 DNA strands simultaneously in an ATP-dependent manner. The chain is DNA gyrase subunit B from Mycoplasma genitalium (strain ATCC 33530 / DSM 19775 / NCTC 10195 / G37) (Mycoplasmoides genitalium).